The chain runs to 204 residues: Refilin-A (204 aa).

A disordered region spans residues 1–52 (MVGHLHLQAMGDTREQSRDGLLDSPDSGLPPSPSPSPPFYALSPGTLDTRTT). A compositionally biased stretch (basic and acidic residues) spans 12–21 (DTREQSRDGL). Pro residues predominate over residues 28–38 (GLPPSPSPSPP). R151 is subject to Asymmetric dimethylarginine.

The protein belongs to the Refilin family. As to quaternary structure, interacts with FLNA and FLNB. In terms of tissue distribution, detected in various tissues, with highest expression in lung, followed by spleen.

Its subcellular location is the cytoplasm. The protein resides in the cytoskeleton. Its function is as follows. Involved in the regulation of the perinuclear actin network and nuclear shape through interaction with filamins. Plays an essential role in the formation of cartilaginous skeletal elements. This is Refilin-A (Rflna) from Mus musculus (Mouse).